Here is a 97-residue protein sequence, read N- to C-terminus: Large ribosomal subunit protein bL28 (97 aa).

Belongs to the bacterial ribosomal protein bL28 family.

This Nitrobacter winogradskyi (strain ATCC 25391 / DSM 10237 / CIP 104748 / NCIMB 11846 / Nb-255) protein is Large ribosomal subunit protein bL28.